The sequence spans 251 residues: Tryptophan synthase alpha chain (251 aa).

Active-site proton acceptor residues include Glu36 and Asp47.

This sequence belongs to the TrpA family. As to quaternary structure, tetramer of two alpha and two beta chains.

The enzyme catalyses (1S,2R)-1-C-(indol-3-yl)glycerol 3-phosphate + L-serine = D-glyceraldehyde 3-phosphate + L-tryptophan + H2O. Its pathway is amino-acid biosynthesis; L-tryptophan biosynthesis; L-tryptophan from chorismate: step 5/5. The alpha subunit is responsible for the aldol cleavage of indoleglycerol phosphate to indole and glyceraldehyde 3-phosphate. The polypeptide is Tryptophan synthase alpha chain (Thermococcus kodakarensis (strain ATCC BAA-918 / JCM 12380 / KOD1) (Pyrococcus kodakaraensis (strain KOD1))).